Reading from the N-terminus, the 454-residue chain is Guanine deaminase (454 aa).

The Zn(2+) site is built by His-82 and His-84. Residues 84–87 (HAPQ), 213–214 (RF), 240–243 (HISE), and Asp-330 contribute to the substrate site. Zn(2+) contacts are provided by His-240 and Asp-330. A Phosphoserine modification is found at Ser-453.

Belongs to the metallo-dependent hydrolases superfamily. ATZ/TRZ family. In terms of assembly, homodimer. It depends on Zn(2+) as a cofactor.

It catalyses the reaction guanine + H2O + H(+) = xanthine + NH4(+). It functions in the pathway purine metabolism; guanine degradation; xanthine from guanine: step 1/1. Catalyzes the hydrolytic deamination of guanine, producing xanthine and ammonia. The sequence is that of Guanine deaminase (Gda) from Rattus norvegicus (Rat).